A 137-amino-acid chain; its full sequence is MRKLGIDFGLSRIGFAISDESNSFSLALENFDYDGSYEKIIQKIQLFLDEYKIDKFIIGYPLNSRGEKTKTCLLIDEFIIHLEKNFDQKIKLINESYSSRKASEILHQANIKNKKQKDKKDMLAAKIILQDYLDLYK.

The protein belongs to the YqgF nuclease family.

Its subcellular location is the cytoplasm. In terms of biological role, could be a nuclease involved in processing of the 5'-end of pre-16S rRNA. The sequence is that of Putative pre-16S rRNA nuclease from Mycoplasmopsis synoviae (strain 53) (Mycoplasma synoviae).